The following is a 526-amino-acid chain: O-phosphoserine--tRNA(Cys) ligase (526 aa).

Substrate is bound by residues 189-191 (HMT), 234-236 (SAS), 276-277 (YY), and asparagine 319.

This sequence belongs to the class-II aminoacyl-tRNA synthetase family. O-phosphoseryl-tRNA(Cys) synthetase subfamily. As to quaternary structure, homotetramer. Interacts with SepCysS.

The enzyme catalyses tRNA(Cys) + O-phospho-L-serine + ATP = O-phospho-L-seryl-tRNA(Cys) + AMP + diphosphate. Functionally, catalyzes the attachment of O-phosphoserine (Sep) to tRNA(Cys). This is O-phosphoserine--tRNA(Cys) ligase from Methanocorpusculum labreanum (strain ATCC 43576 / DSM 4855 / Z).